Consider the following 918-residue polypeptide: MSDVKPPQHFTMNGNPPPPEFKNPKKPGRLTNHLQYIEKVVIRALWKHHFSWPFRQPVDAVRLNLPDYYTIIKNPMDLTTIRKRLENNYYWKAMECVEDFNTMFTNCYVYNRPGDDIVLMAQVLEKLFLEKVAEMPEEEYEISALTTKGPVKGARKSTIGLKKRPPSPMSEVVFQQTVTVIPPDALHTIPSAPLSAQLTAKLKNGVKRKADTTTPSASSIPSCESSSCVTEPKVLKLFSRRGSGRPIKPPCKDLPESPPQHQVGRRTKLSERLKYCNAILKEMFSKKHSAYAWPFYKPVDAETLGLLDYHEIIHQPMDMSTIKKKMEAREYTDALQFAADMRLMFSNCYKYNPPGHEVVSMARKLQDVFEFRFSKIPDEPKNANPVSSHNRVKKERARSPSSSESSDSESSSPENSSDTEEEDEEERAHRLASLEEQQLKAVREQLQLLTQTPLSKILKRSSSSKSSGCKVCTMMNSLKKPKFNSVLRRKESRACDSEEEMNTLPMSYEEKRQLSLDINKLPGDKLGKVVNIIKAREPLLRDTDPEEIEIDFETLKPSTLRALECYVVGCLRKKKNKPPKKSKIKEKDKDLQHATGEQNSHKKTKIETDGEIKDTTHPSRLSDSSSSSSSSDSSSSDSSSSDSCDSDSGLTEQKTKRKQSKGPGHANKIKKKKYYPVVPLPEQALRQANAEVKDSSSASGVMCQSRPSSLVSETGSKDLFASQHAKHPVEDITAITGIPPLLSPLTSPSAAMPATGSQSTSSSQFEASSPLCLYKDIVLKHADSWTSLGKLATQTPCTIKSSKESFQQFRKVAMEKELTTASRGLVSKHCLTQQPQKAKLECQPSKPEVESAELPLMAAILDTPKAPEPSSVLQNSVDREREMARKREQERRRREAMSGVIDMTMQRDIMATFEKNLE.

The disordered stretch occupies residues 1 to 26; it reads MSDVKPPQHFTMNGNPPPPEFKNPKK. The region spanning 29 to 135 is the Bromo 1 domain; sequence RLTNHLQYIE…KLFLEKVAEM (107 aa). The short motif at 204–215 is the Nuclear localization signal element; sequence NGVKRKADTTTP. Disordered stretches follow at residues 241–267, 379–430, 575–712, 738–764, and 862–899; these read RGSGRPIKPPCKDLPESPPQHQVGRRT, EPKN…RAHR, KNKP…SLVS, IPPLLSPLTSPSAAMPATGSQSTSSSQ, and DTPKAPEPSSVLQNSVDREREMARKREQERRRREAMSG. The 110-residue stretch at 267–376 folds into the Bromo 2 domain; that stretch reads TKLSERLKYC…DVFEFRFSKI (110 aa). A compositionally biased stretch (low complexity) spans 399–416; it reads SPSSSESSDSESSSPENS. Residues 426–452 adopt a coiled-coil conformation; it reads ERAHRLASLEEQQLKAVREQLQLLTQT. Residues 496–578 enclose the NET domain; sequence DSEEEMNTLP…GCLRKKKNKP (83 aa). Residues 575-584 are compositionally biased toward basic residues; that stretch reads KNKPPKKSKI. Residues 605–617 show a composition bias toward basic and acidic residues; sequence KIETDGEIKDTTH. Low complexity-rich tracts occupy residues 622–648 and 739–764; these read SDSSSSSSSSDSSSSDSSSSDSCDSDS and PPLLSPLTSPSAAMPATGSQSTSSSQ. Residues 815–902 adopt a coiled-coil conformation; that stretch reads EKELTTASRG…RREAMSGVID (88 aa). Residues 877–896 show a composition bias toward basic and acidic residues; sequence VDREREMARKREQERRRREA.

Belongs to the BET family.

The protein localises to the nucleus. Functionally, testis-specific chromatin protein that specifically binds histone H4 acetylated at 'Lys-5' and 'Lys-8' (H4K5ac and H4K8ac, respectively) and plays a key role in spermatogenesis. Required in late pachytene spermatocytes: plays a role in meiotic and post-meiotic cells by binding to acetylated histones at the promoter of specific meiotic and post-meiotic genes, facilitating their activation at the appropriate time. In the post-meiotic phase of spermatogenesis, binds to hyperacetylated histones and participates in their general removal from DNA. Also recognizes and binds a subset of butyrylated histones: able to bind histone H4 butyrylated at 'Lys-8' (H4K8ac), while it is not able to bind H4 butyrylated at 'Lys-5' (H4K5ac). This Danio rerio (Zebrafish) protein is Bromodomain testis-specific protein (brdt).